The following is a 619-amino-acid chain: Probable galacturonosyltransferase 7 (619 aa).

Residues 1–19 (MKGGGGGGGGGGGGKRRWK) are Cytoplasmic-facing. Residues 20–40 (VLVIGVLVLVILSMLVPLAFL) traverse the membrane as a helical; Signal-anchor for type II membrane protein segment. Topologically, residues 41-619 (LGLHNGFHSP…RFLSDCNVNP (579 aa)) are lumenal. N-linked (GlcNAc...) asparagine glycosylation is found at N68, N106, N132, N343, and N421. The disordered stretch occupies residues 95-139 (KSDINVGSRDVNATSGTDSKKRGLPVSPTVVANPSPANKTKSEAS). A compositionally biased stretch (polar residues) spans 124-139 (VVANPSPANKTKSEAS).

Belongs to the glycosyltransferase 8 family. In terms of tissue distribution, expressed in roots, inflorescences, flowers, siliques, leaves and stems.

The protein localises to the golgi apparatus membrane. The protein operates within glycan metabolism; pectin biosynthesis. Its function is as follows. May be involved in pectin biosynthesis. This Arabidopsis thaliana (Mouse-ear cress) protein is Probable galacturonosyltransferase 7 (GAUT7).